Consider the following 561-residue polypeptide: DNA ligase B (561 aa).

Lys125 functions as the N6-AMP-lysine intermediate in the catalytic mechanism.

This sequence belongs to the NAD-dependent DNA ligase family. LigB subfamily.

It carries out the reaction NAD(+) + (deoxyribonucleotide)n-3'-hydroxyl + 5'-phospho-(deoxyribonucleotide)m = (deoxyribonucleotide)n+m + AMP + beta-nicotinamide D-nucleotide.. Catalyzes the formation of phosphodiester linkages between 5'-phosphoryl and 3'-hydroxyl groups in double-stranded DNA using NAD as a coenzyme and as the energy source for the reaction. The chain is DNA ligase B from Salmonella agona (strain SL483).